The sequence spans 186 residues: Lipid A acyltransferase PagP (186 aa).

Positions 1–25 (MNVSKYVAIFSFVFIQLISVGKVFA) are cleaved as a signal peptide. Active-site residues include histidine 58, aspartate 101, and serine 102.

The protein belongs to the lipid A palmitoyltransferase family. In terms of assembly, homodimer.

Its subcellular location is the cell outer membrane. It carries out the reaction a lipid A + a 1,2-diacyl-sn-glycero-3-phosphocholine = a hepta-acyl lipid A + a 2-acyl-sn-glycero-3-phosphocholine. The enzyme catalyses a lipid IVA + a 1,2-diacyl-sn-glycero-3-phosphocholine = a lipid IVB + a 2-acyl-sn-glycero-3-phosphocholine. The catalysed reaction is a lipid IIA + a 1,2-diacyl-sn-glycero-3-phosphocholine = a lipid IIB + a 2-acyl-sn-glycero-3-phosphocholine. Its function is as follows. Transfers a fatty acid residue from the sn-1 position of a phospholipid to the N-linked hydroxyfatty acid chain on the proximal unit of lipid A or its precursors. The sequence is that of Lipid A acyltransferase PagP from Shigella boydii serotype 4 (strain Sb227).